A 507-amino-acid polypeptide reads, in one-letter code: Ribose import ATP-binding protein RbsA 2 (507 aa).

ABC transporter domains are found at residues 7–245 (FSLD…VGRN) and 249–498 (LFTR…MPQS). ATP is bound at residue 39-46 (GENGAGKS).

The protein belongs to the ABC transporter superfamily. Ribose importer (TC 3.A.1.2.1) family. As to quaternary structure, the complex is composed of an ATP-binding protein (RbsA), two transmembrane proteins (RbsC) and a solute-binding protein (RbsB).

Its subcellular location is the cell inner membrane. The enzyme catalyses D-ribose(out) + ATP + H2O = D-ribose(in) + ADP + phosphate + H(+). Functionally, part of the ABC transporter complex RbsABC involved in ribose import. Responsible for energy coupling to the transport system. The sequence is that of Ribose import ATP-binding protein RbsA 2 from Mesorhizobium japonicum (strain LMG 29417 / CECT 9101 / MAFF 303099) (Mesorhizobium loti (strain MAFF 303099)).